A 60-amino-acid polypeptide reads, in one-letter code: LKCNKLIPIASKTCPAGKNLCYKMFMMSDLTIPVKRGCIDVCPKNSLLVKYVCCNTDRCN.

4 disulfides stabilise this stretch: Cys-3/Cys-21, Cys-14/Cys-38, Cys-42/Cys-53, and Cys-54/Cys-59.

The protein belongs to the three-finger toxin family. Short-chain subfamily. Type IA cytotoxin sub-subfamily. Monomer, or heterodimer with alpha-cobratoxin (AC P01391); disulfide-linked. Expressed by the venom gland.

The protein resides in the secreted. Its subcellular location is the target cell membrane. Its function is as follows. Monomer: shows cytolytic activity (apoptosis is induced in C2C12 cells, but no cytotoxicity is observed on INS-1E). In addition, this toxin shows insulinotropic activity that may be mediated by the modulation of potassium channels (Kv). It induces the increase of intracellular calcium release. It induces insulin secretion from rat INS-1E cells in absence and in presence of glucose, without affecting cell viability and integrity. In presence of glucose, the insulinotropic activity is increased, suggesting a possible synergistic effect with glucose. Its insulinotropic activity does not involve GLP-1R signaling. Heterodimer: has no cytolytic activity, but retains most of the alpha-cobratoxin capacity to compete with alpha-bungarotoxin for binding to Torpedo and alpha-7/CHRNA7 nicotinic acetylcholine receptors (nAChRs) as well as to Lymnea stagnalis acetylcholine-binding protein. The protein is Cytotoxin 1 of Naja kaouthia (Monocled cobra).